The sequence spans 645 residues: 1,4-alpha-glucan branching enzyme GlgB (645 aa).

Asp-309 acts as the Nucleophile in catalysis. Glu-352 serves as the catalytic Proton donor. The segment at 619–645 (VKTRKGSKKQDGSKTKVRSNVTSRGKR) is disordered. The segment covering 636–645 (RSNVTSRGKR) has biased composition (polar residues).

Belongs to the glycosyl hydrolase 13 family. GlgB subfamily. As to quaternary structure, monomer.

It catalyses the reaction Transfers a segment of a (1-&gt;4)-alpha-D-glucan chain to a primary hydroxy group in a similar glucan chain.. Its pathway is glycan biosynthesis; glycogen biosynthesis. Its function is as follows. Catalyzes the formation of the alpha-1,6-glucosidic linkages in glycogen by scission of a 1,4-alpha-linked oligosaccharide from growing alpha-1,4-glucan chains and the subsequent attachment of the oligosaccharide to the alpha-1,6 position. The polypeptide is 1,4-alpha-glucan branching enzyme GlgB (Bacillus mycoides (strain KBAB4) (Bacillus weihenstephanensis)).